The primary structure comprises 21 residues: Apolipophorin 2 (21 aa).

In terms of tissue distribution, expressed in hemolymph.

The protein resides in the secreted. Constitutes the major component of lipophorin, which mediates transport for various types of lipids in hemolymph. Acts by forming lipoprotein particles that bind lipoproteins and lipids. The chain is Apolipophorin 2 from Galleria mellonella (Greater wax moth).